The following is a 287-amino-acid chain: Coatomer subunit epsilon-1 (287 aa).

The protein belongs to the COPE family. In terms of assembly, oligomeric complex that consists of at least the alpha, beta, beta', gamma, delta, epsilon and zeta subunits.

It is found in the cytoplasm. It localises to the golgi apparatus membrane. The protein resides in the cytoplasmic vesicle. Its subcellular location is the COPI-coated vesicle membrane. The coatomer is a cytosolic protein complex that binds to dilysine motifs and reversibly associates with Golgi non-clathrin-coated vesicles, which further mediate biosynthetic protein transport from the ER, via the Golgi up to the trans Golgi network. The coatomer complex is required for budding from Golgi membranes, and is essential for the retrograde Golgi-to-ER transport of dilysine-tagged proteins. The protein is Coatomer subunit epsilon-1 (COPE1) of Oryza sativa subsp. japonica (Rice).